A 208-amino-acid polypeptide reads, in one-letter code: Adapter protein MecA (208 aa).

The protein belongs to the MecA family. In terms of assembly, homodimer.

Enables the recognition and targeting of unfolded and aggregated proteins to the ClpC protease or to other proteins involved in proteolysis. The polypeptide is Adapter protein MecA (Exiguobacterium sibiricum (strain DSM 17290 / CCUG 55495 / CIP 109462 / JCM 13490 / 255-15)).